The primary structure comprises 105 residues: Thioredoxin (105 aa).

The region spanning 1–105 (MANNVMDSSF…SLLDWINKSI (105 aa)) is the Thioredoxin domain. Residues Cys30 and Cys33 are joined by a disulfide bond.

It belongs to the thioredoxin family.

Its function is as follows. Component of the thioredoxin-thioredoxin reductase system. Participates in various redox reactions through the reversible oxidation of its active center dithiol to a disulfide and catalyzes dithiol-disulfide exchange reactions. The polypeptide is Thioredoxin (trxA) (Rickettsia conorii (strain ATCC VR-613 / Malish 7)).